The chain runs to 142 residues: Hemoglobin subunit alpha 1 (142 aa).

Ser1 is modified (N-acetylserine). The region spanning 1-142 (SLSDKDKAAV…VSLALSERYR (142 aa)) is the Globin domain. His59 serves as a coordination point for O2. A heme b-binding site is contributed by His88.

The protein belongs to the globin family. In terms of assembly, hb1 is a heterotetramer of two alpha-1 chains and two beta-1 chains. Hb2 is a heterotetramer of two alpha-2 chains and two beta-1 chains. HbC is a heterotetramer of two alpha-1 chains and two beta-2 chains. As to expression, red blood cells.

In terms of biological role, involved in oxygen transport from gills to the various peripheral tissues. In Eleginops maclovinus (Patagonian blennie), this protein is Hemoglobin subunit alpha 1.